The following is a 446-amino-acid chain: Golgi reassembly-stacking protein 1 (446 aa).

The segment at 1-20 (MGLGASSEQPAGGEGFHLHG) is disordered. A lipid anchor (N-myristoyl glycine) is attached at G2. PDZ GRASP-type domains lie at 14-104 (EGFH…FCSF) and 110-198 (HVWH…YGYL). Residues 14–214 (EGFHLHGVQE…PSSQHKKPPG (201 aa)) are GRASP. H17, H19, and C102 together coordinate Zn(2+). An essential for interaction with GOLGA2/GM130 region spans residues 189–201 (LGCGIGYGYLHRI). Disordered regions lie at residues 202–252 (PTQP…LGSR) and 343–446 (VSGP…EPGL). Phosphothreonine is present on residues T216, T220, and T224. The segment covering 343–354 (VSGPEDIGSSSS) has biased composition (low complexity). S365, S367, and S376 each carry phosphoserine.

This sequence belongs to the GORASP family. In terms of assembly, homodimer. Forms higher-order oligomers under interphase but not mitotic conditions. Dimers of the protein on one membrane might be able to interact with dimers on another and so stack cisternae. Interacts with the C-terminus of GOLGA2/GM130 under both mitotic and non-mitotic conditions. The interaction is critical for the correct targeting of both proteins to the cis-Golgi. Interacts with TMED2 and TMED3. Phosphorylated by CDC2/B1 and PLK kinases during mitosis. Phosphorylation cycle correlates with the cisternal stacking cycle. Phosphorylation of the homodimer prevents the association of dimers into higher-order oligomers, leading to cisternal unstacking. Post-translationally, target for caspase-3 cleavage during apoptosis. The cleavage contributes to Golgi fragmentation and occurs very early in the execution phase of apoptosis. In terms of processing, myristoylated.

Its subcellular location is the golgi apparatus. The protein localises to the cis-Golgi network membrane. In terms of biological role, key structural protein of the Golgi apparatus. The membrane cisternae of the Golgi apparatus adhere to each other to form stacks, which are aligned side by side to form the Golgi ribbon. Acting in concert with GORASP2/GRASP55, is required for the formation and maintenance of the Golgi ribbon, and may be dispensable for the formation of stacks. However, other studies suggest that GORASP1 plays an important role in assembly and membrane stacking of the cisternae, and in the reassembly of Golgi stacks after breakdown during mitosis. Caspase-mediated cleavage of GORASP1 is required for fragmentation of the Golgi during apoptosis. Also mediates, via its interaction with GOLGA2/GM130, the docking of transport vesicles with the Golgi membranes. Mediates ER stress-induced unconventional (ER/Golgi-independent) trafficking of core-glycosylated CFTR to cell membrane. This is Golgi reassembly-stacking protein 1 (Gorasp1) from Mus musculus (Mouse).